Here is a 469-residue protein sequence, read N- to C-terminus: 3-isopropylmalate dehydratase large subunit (469 aa).

Residues C349, C410, and C413 each contribute to the [4Fe-4S] cluster site.

It belongs to the aconitase/IPM isomerase family. LeuC type 1 subfamily. As to quaternary structure, heterodimer of LeuC and LeuD. Requires [4Fe-4S] cluster as cofactor.

It carries out the reaction (2R,3S)-3-isopropylmalate = (2S)-2-isopropylmalate. It functions in the pathway amino-acid biosynthesis; L-leucine biosynthesis; L-leucine from 3-methyl-2-oxobutanoate: step 2/4. Functionally, catalyzes the isomerization between 2-isopropylmalate and 3-isopropylmalate, via the formation of 2-isopropylmaleate. This is 3-isopropylmalate dehydratase large subunit from Neisseria meningitidis serogroup C (strain 053442).